We begin with the raw amino-acid sequence, 49 residues long: Sporulation protein YjcZ (49 aa).

Residues 29 to 49 (STFVLLVVLFILLIIVGASFF) form a helical membrane-spanning segment.

Belongs to the SscA family.

It localises to the membrane. The polypeptide is Sporulation protein YjcZ (yjcZ) (Bacillus subtilis (strain 168)).